A 349-amino-acid chain; its full sequence is 2-oxoglutarate-Fe(II) type oxidoreductase hxnY (349 aa).

The 105-residue stretch at 178–282 folds into the Fe2OG dioxygenase domain; sequence GVATMRMLHY…RYSIPFFFSG (105 aa). The Fe cation site is built by histidine 205, aspartate 207, and histidine 263. Arginine 273 lines the 2-oxoglutarate pocket.

Belongs to the iron/ascorbate-dependent oxidoreductase family. Fe(2+) is required as a cofactor.

Functionally, 2-oxoglutarate-Fe(II) type oxidoreductase, part of the hnx cluster involved in the purine degradation. The nicotinate hydroxylase hnxS accepts nicotinate as a substrate and catalyzes the first step of nicotinate catabolism. The major facilitator-type transporters hxnP and hxnZ are probably involved in the uptake of nicotinate-derived metabolites, and the oxidoreductases hxnT and hxnY in the further metabolism of 6-OH nicotinic acid. The chain is 2-oxoglutarate-Fe(II) type oxidoreductase hxnY from Emericella nidulans (strain FGSC A4 / ATCC 38163 / CBS 112.46 / NRRL 194 / M139) (Aspergillus nidulans).